We begin with the raw amino-acid sequence, 305 residues long: Lysosomal thioesterase PPT2 (305 aa).

The signal sequence occupies residues 1–32; sequence MLGLPERRLPSAEFLLLLPFLLLLLLLLPAAP. 2 disulfide bridges follow: Cys-112–Cys-120 and Cys-168–Cys-179. The active-site Nucleophile is Ser-114. A glycan (N-linked (GlcNAc...) asparagine) is linked at Asn-193. Active-site residues include Asp-231 and His-286. Cysteines 279 and 299 form a disulfide.

It belongs to the palmitoyl-protein thioesterase family.

The protein localises to the lysosome. The enzyme catalyses hexadecanoyl-CoA + H2O = hexadecanoate + CoA + H(+). The catalysed reaction is S-hexadecanoyl-N-acetylcysteamine + H2O = N-acetylcysteamine + hexadecanoate + H(+). Functionally, catalyzes the cleavage of thioester bonds from S-palmitoyl-CoA or S-palmitoyl-N-acetylcysteamine (unbranched structures) but does not have activity against palmitoylcysteine or palmitoylated proteins, branched structures or bulky head groups. Conversely, hydrolyzes both long and short chain fatty acyl-CoA substrate. The protein is Lysosomal thioesterase PPT2 (PPT2) of Bos taurus (Bovine).